A 451-amino-acid chain; its full sequence is Probable D-serine dehydratase (451 aa).

Residue Lys119 is modified to N6-(pyridoxal phosphate)lysine.

Belongs to the serine/threonine dehydratase family. DsdA subfamily. Requires pyridoxal 5'-phosphate as cofactor.

It catalyses the reaction D-serine = pyruvate + NH4(+). The chain is Probable D-serine dehydratase from Acidovorax sp. (strain JS42).